The primary structure comprises 330 residues: Glycerol-3-phosphate dehydrogenase [NAD(P)+] (330 aa).

Residues Ser11, Phe12, Arg32, and Lys106 each coordinate NADPH. Sn-glycerol 3-phosphate is bound by residues Lys106, Gly133, and Ser135. NADPH is bound at residue Ala137. Sn-glycerol 3-phosphate contacts are provided by Lys188, Asp241, Ser251, Arg252, and Asn253. The active-site Proton acceptor is Lys188. Residue Arg252 participates in NADPH binding. 2 residues coordinate NADPH: Val276 and Glu278.

The protein belongs to the NAD-dependent glycerol-3-phosphate dehydrogenase family.

Its subcellular location is the cytoplasm. The catalysed reaction is sn-glycerol 3-phosphate + NAD(+) = dihydroxyacetone phosphate + NADH + H(+). It carries out the reaction sn-glycerol 3-phosphate + NADP(+) = dihydroxyacetone phosphate + NADPH + H(+). The protein operates within membrane lipid metabolism; glycerophospholipid metabolism. In terms of biological role, catalyzes the reduction of the glycolytic intermediate dihydroxyacetone phosphate (DHAP) to sn-glycerol 3-phosphate (G3P), the key precursor for phospholipid synthesis. The chain is Glycerol-3-phosphate dehydrogenase [NAD(P)+] from Clostridium botulinum (strain Alaska E43 / Type E3).